Reading from the N-terminus, the 726-residue chain is Serine/threonine-protein kinase PKH3 (726 aa).

In terms of domain architecture, Protein kinase spans 10–271 (FLFREELGHG…LEQIKKHKWF (262 aa)). ATP-binding positions include 16–24 (LGHGSYSTV) and K39. The active-site Proton acceptor is D136. The interval 629 to 679 (QDIPLPSPAKSSSNSGVSEPISKIPPRQLVSASEQSHKAKSEAHTKKANSY) is disordered. The span at 663–673 (QSHKAKSEAHT) shows a compositional bias: basic and acidic residues.

The protein belongs to the protein kinase superfamily. Ser/Thr protein kinase family.

The enzyme catalyses L-seryl-[protein] + ATP = O-phospho-L-seryl-[protein] + ADP + H(+). It catalyses the reaction L-threonyl-[protein] + ATP = O-phospho-L-threonyl-[protein] + ADP + H(+). In terms of biological role, serine/threonine-protein kinase. The protein is Serine/threonine-protein kinase PKH3 (PKH3) of Eremothecium gossypii (strain ATCC 10895 / CBS 109.51 / FGSC 9923 / NRRL Y-1056) (Yeast).